Reading from the N-terminus, the 543-residue chain is Tetrahydroberberine oxidase (543 aa).

The N-terminal stretch at 1–26 is a signal peptide; it reads MIPNSSSSSILSLLVLLLFSTSSSWA. Cysteine 37 and cysteine 97 form a disulfide bridge. 9 N-linked (GlcNAc...) asparagine glycosylation sites follow: asparagine 54, asparagine 74, asparagine 135, asparagine 142, asparagine 162, asparagine 295, asparagine 335, asparagine 440, and asparagine 482. The region spanning 75–250 is the FAD-binding PCMH-type domain; it reads STQKPEFIIT…LSWKVKLVPV (176 aa). Positions 112 to 175 form a cross-link, 6-(S-cysteinyl)-8alpha-(pros-histidyl)-FAD (His-Cys); that stretch reads HDVEGLSYVS…NTLGFPAGFC (64 aa).

It belongs to the oxygen-dependent FAD-linked oxidoreductase family. FAD serves as cofactor. Post-translationally, the FAD cofactor is bound via a bicovalent 6-S-cysteinyl, 8alpha-N1-histidyl FAD linkage.

It catalyses the reaction (S)-canadine + 2 O2 + H(+) = berberine + 2 H2O2. Functionally, catalyzes the oxidation of different tetrahydroprotoberberines, such as (S)-canadine, (S)-scoulerine and (S)-tetrahydropalmatine. This Argemone mexicana (Mexican prickly poppy) protein is Tetrahydroberberine oxidase.